Here is a 1044-residue protein sequence, read N- to C-terminus: Diacylglycerol lipase-alpha (1044 aa).

Topologically, residues M1–A22 are cytoplasmic. A helical membrane pass occupies residues I23–L43. Residues V44–R60 are Extracellular-facing. A helical transmembrane segment spans residues G61–M81. At R82–R101 the chain is on the cytoplasmic side. Residues L102 to Y122 form a helical membrane-spanning segment. The Extracellular segment spans residues Y123 to L136. Residue N133 is glycosylated (N-linked (GlcNAc...) asparagine). A helical transmembrane segment spans residues G137–F157. The Cytoplasmic portion of the chain corresponds to D158–R1044. Residues S472 and D524 each act as charge relay system in the active site. S728, S730, S733, S744, S784, S786, S808, S810, S835, S849, and S954 each carry phosphoserine. The interval L848–G905 is disordered. Residues Q1013–R1044 are disordered. The residue at position 1025 (T1025) is a Phosphothreonine.

It belongs to the AB hydrolase superfamily. Lipase family. Interacts (via C-terminal) with CAMK2A; leading to the phosphorylation and inhibition of DAGLA enzymatic activity. Interacts (via PPXXF motif) with HOMER1 and HOMER2; this interaction is required for DAGLA membrane localization. It depends on Ca(2+) as a cofactor. In terms of processing, phosphorylated at Ser-784 and Ser-810 by CAMK2A; phosphorylation by CAMK2A inhibits diacylglycerol lipase activity.

It is found in the cell membrane. Its subcellular location is the cell projection. The protein localises to the dendritic spine membrane. It localises to the postsynaptic density membrane. The protein resides in the early endosome membrane. The enzyme catalyses a 1,2-diacyl-sn-glycerol + H2O = a 2-acylglycerol + a fatty acid + H(+). The catalysed reaction is 1-octadecanoyl-2-(5Z,8Z,11Z,14Z-eicosatetraenoyl)-sn-glycerol + H2O = 2-(5Z,8Z,11Z,14Z-eicosatetraenoyl)-glycerol + octadecanoate + H(+). It carries out the reaction 1,2-di-(9Z-octadecenoyl)-sn-glycerol + H2O = 2-(9Z-octadecenoyl)-glycerol + (9Z)-octadecenoate + H(+). It catalyses the reaction 1-(9Z-octadecenoyl)-2-(5Z,8Z,11Z,14Z-eicosatetraenoyl)-sn-glycerol + H2O = 2-(5Z,8Z,11Z,14Z-eicosatetraenoyl)-glycerol + (9Z)-octadecenoate + H(+). The enzyme catalyses 1-(9Z-octadecenoyl)-2-octadecanoyl-sn-glycerol + H2O = 2-octadecanoylglycerol + (9Z)-octadecenoate + H(+). The catalysed reaction is 1-(9Z-octadecenoyl)-2-(9Z,12Z-octadecadienoyl)-sn-glycerol + H2O = 2-(9Z,12Z-octadecadienoyl)-glycerol + (9Z)-octadecenoate + H(+). It carries out the reaction 1-(9Z-octadecenoyl)-2-O-(5Z,8Z,11Z,14Z-eicosatetraenyl)-sn-glycerol + H2O = 2-O-(5Z,8Z,11Z,14Z)-eicosatetraenylglycerol + (9Z)-octadecenoate + H(+). Inhibited by 1,2,3-triazole urea covalent inhibitors KT172, DH376 and DO34. Inhibited by p-hydroxy-mercuri-benzoate and HgCl(2), but not to PMSF. Also inhibited by RHC80267. Diacylglycerol lipase activity is inhibited by the phosphorylation of Ser-784 and Ser-810 by CAMK2A. Serine hydrolase that hydrolyzes arachidonic acid-esterified diacylglycerols (DAGs) to produce the principal endocannabinoid, 2-arachidonoylglycerol (2-AG). Preferentially hydrolyzes sn-1 fatty acids from diacylglycerols (DAG) that contain arachidonic acid (AA) esterified at the sn-2 position to biosynthesize 2-AG. Has negligible activity against other lipids including monoacylglycerols and phospholipids. Plays a key role in regulating 2-AG signaling in the CNS. Controls the activity of 2-AG as a retrograde messenger at neuronal synapses. Supports axonal growth during development and adult neurogenesis. Plays a role for eCB signaling in the physiological regulation of anxiety and depressive behaviors. Also regulates neuroinflammatory responses in the brain, in particular, LPS-induced microglial activation. The sequence is that of Diacylglycerol lipase-alpha (Dagla) from Rattus norvegicus (Rat).